The chain runs to 221 residues: Max dimerization protein 1 (221 aa).

The Nuclear localization signal signature appears at 21-49 (RREREAEHGYASMLPYNSKERDGLKRKSK). Disordered stretches follow at residues 29 to 67 (GYASMLPYNSKERDGLKRKSKSKKSSSSRSTHNEMEKNR) and 178 to 221 (SSSS…SIAL). A bHLH domain is found at 55 to 107 (SSRSTHNEMEKNRRAHLRLCLEKLKMLVPLGPESNRHTTLSLLMRAKLHIKKL). Residues 193 to 221 (MQSICSDEGYSSSGLKSIGLQNNPKSIAL) are compositionally biased toward polar residues.

Heterodimer with MAX; the interaction is required for DNA-binding. DNA binding requires dimerization with another bHLH protein; does not form homodimers, and does not bind to DNA in the absence of MAX in vitro. In terms of tissue distribution, expressed primarily in cells that have undergone terminal differentiation including notochord, floor plate and cement gland.

The protein localises to the nucleus. Its function is as follows. Component of a transcriptional repressor complex together with MAX. In complex with MAX binds to the core DNA sequence 5'-CAC[GA]TG-3'. Antagonizes MYC transcriptional activity by competing with MYC for MAX binding. Binds to the TERT promoter and represses telomerase expression, possibly by interfering with MYC binding. The chain is Max dimerization protein 1 (mxd1) from Xenopus laevis (African clawed frog).